We begin with the raw amino-acid sequence, 602 residues long: Probable translation initiation factor IF-2 (602 aa).

One can recognise a tr-type G domain in the interval 10 to 227; the sequence is LRQPIVVVLG…LLAGLTQNYM (218 aa). A G1 region spans residues 19–26; sequence GHVDHGKT. 19–26 is a GTP binding site; it reads GHVDHGKT. The segment at 44–48 is G2; it reads EMTQE. Residues 83–86 are G3; sequence DTPG. GTP-binding positions include 83–87 and 137–140; these read DTPGH and NKID. A G4 region spans residues 137 to 140; the sequence is NKID. Positions 205 to 207 are G5; the sequence is SAK.

The protein belongs to the TRAFAC class translation factor GTPase superfamily. Classic translation factor GTPase family. IF-2 subfamily.

Function in general translation initiation by promoting the binding of the formylmethionine-tRNA to ribosomes. Seems to function along with eIF-2. This chain is Probable translation initiation factor IF-2, found in Sulfurisphaera tokodaii (strain DSM 16993 / JCM 10545 / NBRC 100140 / 7) (Sulfolobus tokodaii).